Consider the following 294-residue polypeptide: DNA replication complex GINS protein SLD5 (294 aa).

It belongs to the GINS4/SLD5 family. In terms of assembly, component of the GINS complex which is a heterotetramer composed of SLD5, PSF1, PSF2 and PSF3. Interacts with PSF2.

Its subcellular location is the nucleus. Its function is as follows. Required for DNA replication. Functions as part of the GINS complex which plays an essential role in the initiation of DNA replication by binding to DNA replication origins and facilitating the assembly of the DNA replication machinery. The polypeptide is DNA replication complex GINS protein SLD5 (Saccharomyces cerevisiae (strain ATCC 204508 / S288c) (Baker's yeast)).